Here is a 101-residue protein sequence, read N- to C-terminus: CLAVATA3/ESR (CLE)-related protein 18 (101 aa).

The signal sequence occupies residues 1–25 (MHLLKGGVVLIITLILFLITSSIVA). Residues 37-58 (RQIPTGPDPLHNPPQPSPKHHH) form a disordered region. Hydroxyproline is present on residues Pro40 and Pro43. A compositionally biased stretch (pro residues) spans 42-53 (GPDPLHNPPQPS). Residue Pro43 is glycosylated (O-linked (Ara...) hydroxyproline). Sulfotyrosine is present on Tyr76. A Hydroxyproline modification is found at Pro84.

It belongs to the CLV3/ESR signal peptide family. In terms of processing, the tyrosine sulfation is critical for the function of the peptide. The O-glycosylation (arabinosylation) of the hydroxyproline Pro-43 enhances binding affinity of the CLE18p peptide for its receptor. Expressed in roots, leaves, siliques and seedlings.

Its subcellular location is the secreted. The protein resides in the extracellular space. Functionally, root growth factor that regulates the pattern of root growth and lateral root development by modulating the length and the number of cortical cells in the root apical meristem (RAM), and the anticlinal asymmetric cell divisions in lateral root initiation cells. In terms of biological role, extracellular signal peptide that regulates cell fate. Represses root apical meristem maintenance. Root growth factor that regulates the pattern of root growth and lateral root development. Regulates the transition of protophloem cells from proliferation to differentiation, thus impinging on postembryonic growth capacity of the root meristem; this signaling pathway requires CRN and CLV2. The protein is CLAVATA3/ESR (CLE)-related protein 18 of Arabidopsis thaliana (Mouse-ear cress).